A 233-amino-acid polypeptide reads, in one-letter code: Large ribosomal subunit protein uL1 (233 aa).

The protein belongs to the universal ribosomal protein uL1 family. As to quaternary structure, part of the 50S ribosomal subunit.

In terms of biological role, binds directly to 23S rRNA. The L1 stalk is quite mobile in the ribosome, and is involved in E site tRNA release. Protein L1 is also a translational repressor protein, it controls the translation of the L11 operon by binding to its mRNA. The polypeptide is Large ribosomal subunit protein uL1 (Rhodospirillum rubrum (strain ATCC 11170 / ATH 1.1.1 / DSM 467 / LMG 4362 / NCIMB 8255 / S1)).